Consider the following 218-residue polypeptide: Large ribosomal subunit protein bL25 (218 aa).

The interval Ser-187–Lys-218 is disordered. Over residues Glu-202 to Lys-218 the composition is skewed to low complexity.

It belongs to the bacterial ribosomal protein bL25 family. CTC subfamily. In terms of assembly, part of the 50S ribosomal subunit; part of the 5S rRNA/L5/L18/L25 subcomplex. Contacts the 5S rRNA. Binds to the 5S rRNA independently of L5 and L18.

Its function is as follows. This is one of the proteins that binds to the 5S RNA in the ribosome where it forms part of the central protuberance. In Anaplasma marginale (strain Florida), this protein is Large ribosomal subunit protein bL25.